The sequence spans 541 residues: MAKTIAYDEEARRGLERGLNSLADAVKVTLGPKGRNVVLEKKWGAPTITNDGVSIAKEIELEDPYEKIGAELVKEVAKKTDDVAGDGTTTATVLAQALVREGLRNVAAGANPLGLKRGIEKAVEKVTETLLKSAKEVETKEQIAATAGISAGDQSIGDLIAEAMDKVGNEGVITVEESNTFGLQLELTEGMRFDKGYISGYFVTDAERQEAVLEDPYILLVSSKVSTVKDLLPLLEKVIQSGKPLLIIAEDVEGEALSTLVVNKIRGTFKSVAVKAPGFGDRRKAMLQDMAILTGGQVISEEVGLSLETADVSLLGKARKVVVTKDETTIVEGAGDAEAIQGRVAQIRAEIENSDSDYDREKLQERLAKLAGGVAVIKAGAATEVELKERKHRIEDAVRNAKAAVEEGIVAGGGVALLQSAPSLEELSLTGDEATGANIVRVALSAPLKQIALNGGLEPGVVAEKVSNLPAGHGLNAATGEYEDLLAAGVADPVKVTRSALQNAASIAALFLTTEAVVADKPEKAAAPAGDPTGGMGGMDF.

Residues Thr-29–Pro-32 and Asp-86–Thr-90 each bind ATP. Lys-132 participates in a covalent cross-link: Isoglutamyl lysine isopeptide (Lys-Gln) (interchain with Q-Cter in protein Pup). Residues Gly-413, Asn-476–Ala-478, and Asp-492 each bind ATP.

This sequence belongs to the chaperonin (HSP60) family. As to quaternary structure, forms a cylinder of 14 subunits composed of two heptameric rings stacked back-to-back. Interacts with the co-chaperonin GroES.

It localises to the secreted. It is found in the capsule. The protein localises to the cell surface. The protein resides in the cell wall. The catalysed reaction is ATP + H2O + a folded polypeptide = ADP + phosphate + an unfolded polypeptide.. Functionally, together with its co-chaperonin GroES, plays an essential role in assisting protein folding. The GroEL-GroES system forms a nano-cage that allows encapsulation of the non-native substrate proteins and provides a physical environment optimized to promote and accelerate protein folding. The chain is Chaperonin GroEL 2 from Mycolicibacterium smegmatis (strain ATCC 700084 / mc(2)155) (Mycobacterium smegmatis).